A 245-amino-acid chain; its full sequence is 1-(5-phosphoribosyl)-5-[(5-phosphoribosylamino)methylideneamino] imidazole-4-carboxamide isomerase (245 aa).

Catalysis depends on Asp-7, which acts as the Proton acceptor. The active-site Proton donor is the Asp-129.

Belongs to the HisA/HisF family.

Its subcellular location is the cytoplasm. It catalyses the reaction 1-(5-phospho-beta-D-ribosyl)-5-[(5-phospho-beta-D-ribosylamino)methylideneamino]imidazole-4-carboxamide = 5-[(5-phospho-1-deoxy-D-ribulos-1-ylimino)methylamino]-1-(5-phospho-beta-D-ribosyl)imidazole-4-carboxamide. The protein operates within amino-acid biosynthesis; L-histidine biosynthesis; L-histidine from 5-phospho-alpha-D-ribose 1-diphosphate: step 4/9. The polypeptide is 1-(5-phosphoribosyl)-5-[(5-phosphoribosylamino)methylideneamino] imidazole-4-carboxamide isomerase (Shewanella sp. (strain MR-4)).